The primary structure comprises 1427 residues: DNA-directed RNA polymerase subunit beta' (1427 aa).

Positions 66, 68, 81, and 84 each coordinate Zn(2+). The Mg(2+) site is built by Asp472, Asp474, and Asp476. Residues Cys815, Cys889, Cys896, and Cys899 each contribute to the Zn(2+) site.

Belongs to the RNA polymerase beta' chain family. As to quaternary structure, the RNAP catalytic core consists of 2 alpha, 1 beta, 1 beta' and 1 omega subunit. When a sigma factor is associated with the core the holoenzyme is formed, which can initiate transcription. Requires Mg(2+) as cofactor. It depends on Zn(2+) as a cofactor.

It carries out the reaction RNA(n) + a ribonucleoside 5'-triphosphate = RNA(n+1) + diphosphate. In terms of biological role, DNA-dependent RNA polymerase catalyzes the transcription of DNA into RNA using the four ribonucleoside triphosphates as substrates. The protein is DNA-directed RNA polymerase subunit beta' of Bacteroides fragilis (strain YCH46).